The following is a 630-amino-acid chain: Probable potassium transport system protein Kup (630 aa).

12 helical membrane-spanning segments follow: residues 17–37 (LAIA…LYSL), 51–71 (PSAI…VVGI), 105–125 (ITGL…GDAV), 144–164 (PQLS…LFWI), 175–195 (LFGP…IYHI), 218–238 (VLLA…AEAL), 255–275 (YVLV…LLLL), 283–303 (PFFL…STVA), 344–364 (IYVP…VIGF), 374–394 (YGIA…VVMV), 402–422 (LLVA…FGAN), and 428–448 (QGGW…MTWY).

This sequence belongs to the HAK/KUP transporter (TC 2.A.72) family.

It localises to the cell inner membrane. It carries out the reaction K(+)(in) + H(+)(in) = K(+)(out) + H(+)(out). Its function is as follows. Transport of potassium into the cell. Likely operates as a K(+):H(+) symporter. In Burkholderia pseudomallei (strain K96243), this protein is Probable potassium transport system protein Kup.